The following is a 298-amino-acid chain: Lipoyl synthase (298 aa).

[4Fe-4S] cluster contacts are provided by cysteine 40, cysteine 45, cysteine 51, cysteine 67, cysteine 71, cysteine 74, and serine 280. Residues 53-269 (AVRKTATFMI…KEIALSKGFS (217 aa)) form the Radical SAM core domain.

This sequence belongs to the radical SAM superfamily. Lipoyl synthase family. [4Fe-4S] cluster is required as a cofactor.

It is found in the cytoplasm. It catalyses the reaction [[Fe-S] cluster scaffold protein carrying a second [4Fe-4S](2+) cluster] + N(6)-octanoyl-L-lysyl-[protein] + 2 oxidized [2Fe-2S]-[ferredoxin] + 2 S-adenosyl-L-methionine + 4 H(+) = [[Fe-S] cluster scaffold protein] + N(6)-[(R)-dihydrolipoyl]-L-lysyl-[protein] + 4 Fe(3+) + 2 hydrogen sulfide + 2 5'-deoxyadenosine + 2 L-methionine + 2 reduced [2Fe-2S]-[ferredoxin]. It functions in the pathway protein modification; protein lipoylation via endogenous pathway; protein N(6)-(lipoyl)lysine from octanoyl-[acyl-carrier-protein]. Functionally, catalyzes the radical-mediated insertion of two sulfur atoms into the C-6 and C-8 positions of the octanoyl moiety bound to the lipoyl domains of lipoate-dependent enzymes, thereby converting the octanoylated domains into lipoylated derivatives. In Bacillus thuringiensis (strain Al Hakam), this protein is Lipoyl synthase.